A 1163-amino-acid chain; its full sequence is Type IV pilus biogenesis factor PilY1 (1163 aa).

Residues methionine 1 to alanine 30 form the signal peptide. Residues serine 329 to tyrosine 352 are disordered. Ca(2+) is bound by residues aspartate 600, aspartate 602, asparagine 604, and aspartate 608. An integrin-binding motif RGD region spans residues arginine 619 to aspartate 621. Positions 851, 853, 855, 857, and 859 each coordinate Ca(2+). Residues serine 1138–asparagine 1163 form a disordered region.

This sequence belongs to the PilY1 family. As to quaternary structure, interacts (via C-terminal 532-1163) with host integrins alpha-V/beta-3 (ITGAV/ITGB3) and alpha-V/beta-5 (ITGAV/ITGB5).

The protein resides in the fimbrium. The protein localises to the membrane. It localises to the cytoplasm. Its subcellular location is the cytosol. Functionally, involved in pilus assembly, twitching motility and adhesion to host cells. Primes type IV pili (T4P) assembly and is required for inclusion of minor pilins PilV, PilW and PilX to the surface pili. Stabilizes assembled pilus fibers likely by antagonizing retraction mediated by PilT. Calcium-binding and calcium release by PilY1 seem to be essential for twitching motility and for regulation of pilus retraction dynamics of PilT. Adhesin for human tissue specifically recognizing a host receptor localized or enriched on basolateral epithelial cell surfaces. Binds host integrins in an calcium-dependent manner in vitro and this interaction may be employed by the bacterium to mediate host epithelial cell binding in vivo. The chain is Type IV pilus biogenesis factor PilY1 from Pseudomonas aeruginosa (strain PAK).